The following is a 672-amino-acid chain: Beta-galactosidase BgaB (672 aa).

A substrate-binding site is contributed by Arg-109. Cys-113 provides a ligand contact to Zn(2+). Asn-147 provides a ligand contact to substrate. Residue Glu-148 is the Proton donor of the active site. Zn(2+)-binding residues include Cys-156, Cys-158, and Cys-161. The active-site Nucleophile is Glu-303. Substrate-binding positions include Trp-311 and 351–354 (EKFH).

It belongs to the glycosyl hydrolase 42 family.

It catalyses the reaction Hydrolysis of terminal non-reducing beta-D-galactose residues in beta-D-galactosides.. The polypeptide is Beta-galactosidase BgaB (Geobacillus sp. (strain Y412MC61)).